A 726-amino-acid chain; its full sequence is Ribonuclease R (726 aa).

Residues R262–L590 form the RNB domain. The S1 motif domain occupies G642–Y723.

The protein belongs to the RNR ribonuclease family. RNase R subfamily. As to quaternary structure, monomer.

The protein resides in the cytoplasm. It catalyses the reaction Exonucleolytic cleavage in the 3'- to 5'-direction to yield nucleoside 5'-phosphates.. Functionally, 3'-5' exoribonuclease that releases 5'-nucleoside monophosphates and is involved in maturation of structured RNAs. This Buchnera aphidicola subsp. Schizaphis graminum (strain Sg) protein is Ribonuclease R.